A 911-amino-acid chain; its full sequence is Alpha-actinin-4 (911 aa).

Positions 1-30 (MVDYHAASQSYQYGPSSAGNGAGGGGSMGD) are disordered. An actin-binding region spans residues 1-269 (MVDYHAASQS…YVSSFYHAFS (269 aa)). Residues 12-26 (QYGPSSAGNGAGGGG) form an interaction with VCL region. Phosphotyrosine is present on Y31. Residues 40–61 (RDLLLDPAWEKQQRKTFTAWCN) are interaction with VCL. 2 consecutive Calponin-homology (CH) domains span residues 50 to 154 (KQQR…LRFA) and 163 to 269 (TSAK…HAFS). The LXXLL motif signature appears at 84–88 (LMLLL). The tract at residues 108–126 (KINNVNKALDFIASKGVKL) is interaction with VCL. K114 carries the N6-acetyllysine modification. Positions 177-192 (TAPYKNVNVQNFHISW) are polyphosphoinositide (PIP2)-binding. K214 bears the N6-acetyllysine mark. T249 carries the phosphothreonine modification. Spectrin repeat units follow at residues 293-403 (HLME…WLLN), 413-518 (HLAE…ALEK), 528-639 (QLHL…ALLE), and 649-752 (HLRR…EVEN). N6-acetyllysine is present on residues K592 and K625. Position 696 is a phosphoserine (S696). Residues 736 to 911 (WEQLLTTIAR…STALYGESDL (176 aa)) form a mediates interaction with MICALL2 region. EF-hand domains follow at residues 765-800 (EQMQ…LGYD) and 806-841 (QGEA…ETTD). A Ca(2+)-binding site is contributed by D778. K779 is subject to N6-acetyllysine. The Ca(2+) site is built by D780 and E789. K859 is subject to N6-acetyllysine. S909 is modified (phosphoserine).

It belongs to the alpha-actinin family. Homodimer; antiparallel. Identified in a IGF2BP1-dependent mRNP granule complex containing untranslated mRNAs. Component of the CART complex, at least composed of ACTN4, HGS/HRS, MYO5B and TRIM3. Binds TRIM3 at the N-terminus. Interacts with MAGI1. Interacts with PDLIM2. Identified in a complex with CASK, IQGAP1, MAGI2, NPHS1, SPTAN1 and SPTBN1. Interacts with MICALL2 (preferentially in opened conformation); stimulated by RAB13 activation. Interacts with PPARG and RARA. Binds to VCL; this interaction triggers VCL conformational changes. Interacts with SEPTIN14. Interacts with IGSF8.

It localises to the nucleus. It is found in the cytoplasm. Its subcellular location is the cell junction. The protein localises to the cytoskeleton. The protein resides in the stress fiber. It localises to the perinuclear region. Functionally, F-actin cross-linking protein which is thought to anchor actin to a variety of intracellular structures. This is a bundling protein. Probably involved in vesicular trafficking via its association with the CART complex. The CART complex is necessary for efficient transferrin receptor recycling but not for EGFR degradation. Involved in tight junction assembly in epithelial cells probably through interaction with MICALL2. Links MICALL2 to the actin cytoskeleton and recruits it to the tight junctions. May also function as a transcriptional coactivator, stimulating transcription mediated by the nuclear hormone receptors PPARG and RARA. Association with IGSF8 regulates the immune synapse formation and is required for efficient T-cell activation. This chain is Alpha-actinin-4, found in Pongo abelii (Sumatran orangutan).